The sequence spans 209 residues: MFHKELLKLYFICGTTTCQGKNLYTVVEEALKGGITLFQFREKGESALEGLEKLELAIQIKELCKKYNVPFIVNDDIDLAMEIDADGVHVGQDDIGVDEIRKLMPDKIIGLSIRNEEEFQQSKVEYVDYVGVGPVFDTQSKDDAGGAIGYEGLELMRKLLPQMPLVAIGGIQTKHIKDIIKTNMDGVSIISAISYAKNIEKTVREMSEQ.

4-amino-2-methyl-5-(diphosphooxymethyl)pyrimidine contacts are provided by residues 39-43 and Asn74; that span reads QFREK. Positions 75 and 94 each coordinate Mg(2+). Residue Ser112 participates in 4-amino-2-methyl-5-(diphosphooxymethyl)pyrimidine binding. 138–140 contacts 2-[(2R,5Z)-2-carboxy-4-methylthiazol-5(2H)-ylidene]ethyl phosphate; that stretch reads TQS. Residue Lys141 participates in 4-amino-2-methyl-5-(diphosphooxymethyl)pyrimidine binding. Residues Gly170 and 190-191 each bind 2-[(2R,5Z)-2-carboxy-4-methylthiazol-5(2H)-ylidene]ethyl phosphate; that span reads IS.

Belongs to the thiamine-phosphate synthase family. It depends on Mg(2+) as a cofactor.

The catalysed reaction is 2-[(2R,5Z)-2-carboxy-4-methylthiazol-5(2H)-ylidene]ethyl phosphate + 4-amino-2-methyl-5-(diphosphooxymethyl)pyrimidine + 2 H(+) = thiamine phosphate + CO2 + diphosphate. It carries out the reaction 2-(2-carboxy-4-methylthiazol-5-yl)ethyl phosphate + 4-amino-2-methyl-5-(diphosphooxymethyl)pyrimidine + 2 H(+) = thiamine phosphate + CO2 + diphosphate. It catalyses the reaction 4-methyl-5-(2-phosphooxyethyl)-thiazole + 4-amino-2-methyl-5-(diphosphooxymethyl)pyrimidine + H(+) = thiamine phosphate + diphosphate. It functions in the pathway cofactor biosynthesis; thiamine diphosphate biosynthesis; thiamine phosphate from 4-amino-2-methyl-5-diphosphomethylpyrimidine and 4-methyl-5-(2-phosphoethyl)-thiazole: step 1/1. Condenses 4-methyl-5-(beta-hydroxyethyl)thiazole monophosphate (THZ-P) and 2-methyl-4-amino-5-hydroxymethyl pyrimidine pyrophosphate (HMP-PP) to form thiamine monophosphate (TMP). In Streptococcus pneumoniae (strain ATCC BAA-255 / R6), this protein is Thiamine-phosphate synthase 1.